We begin with the raw amino-acid sequence, 426 residues long: Histidine--tRNA ligase (426 aa).

The protein belongs to the class-II aminoacyl-tRNA synthetase family. As to quaternary structure, homodimer.

It localises to the cytoplasm. It carries out the reaction tRNA(His) + L-histidine + ATP = L-histidyl-tRNA(His) + AMP + diphosphate + H(+). The sequence is that of Histidine--tRNA ligase from Streptococcus gordonii (strain Challis / ATCC 35105 / BCRC 15272 / CH1 / DL1 / V288).